Consider the following 255-residue polypeptide: 1-(5-phosphoribosyl)-5-[(5-phosphoribosylamino)methylideneamino] imidazole-4-carboxamide isomerase (255 aa).

The active-site Proton acceptor is the D8. D129 functions as the Proton donor in the catalytic mechanism.

This sequence belongs to the HisA/HisF family.

The protein resides in the cytoplasm. It catalyses the reaction 1-(5-phospho-beta-D-ribosyl)-5-[(5-phospho-beta-D-ribosylamino)methylideneamino]imidazole-4-carboxamide = 5-[(5-phospho-1-deoxy-D-ribulos-1-ylimino)methylamino]-1-(5-phospho-beta-D-ribosyl)imidazole-4-carboxamide. The protein operates within amino-acid biosynthesis; L-histidine biosynthesis; L-histidine from 5-phospho-alpha-D-ribose 1-diphosphate: step 4/9. The protein is 1-(5-phosphoribosyl)-5-[(5-phosphoribosylamino)methylideneamino] imidazole-4-carboxamide isomerase of Prochlorococcus marinus (strain MIT 9515).